Here is a 208-residue protein sequence, read N- to C-terminus: Elongation factor Ts, chloroplastic (208 aa).

Belongs to the EF-Ts family.

It localises to the plastid. The protein resides in the chloroplast. Functionally, associates with the EF-Tu.GDP complex and induces the exchange of GDP to GTP. It remains bound to the aminoacyl-tRNA.EF-Tu.GTP complex up to the GTP hydrolysis stage on the ribosome. In Cyanidium caldarium (Red alga), this protein is Elongation factor Ts, chloroplastic (tsf).